The chain runs to 337 residues: Aspartate carbamoyltransferase catalytic subunit (337 aa).

Arg-59 and Thr-60 together coordinate carbamoyl phosphate. Lys-87 serves as a coordination point for L-aspartate. Residues Arg-109, His-142, and Gln-145 each coordinate carbamoyl phosphate. Arg-182 and Arg-253 together coordinate L-aspartate. Carbamoyl phosphate is bound by residues Gly-294 and Pro-295.

Belongs to the aspartate/ornithine carbamoyltransferase superfamily. ATCase family. As to quaternary structure, heterododecamer (2C3:3R2) of six catalytic PyrB chains organized as two trimers (C3), and six regulatory PyrI chains organized as three dimers (R2).

It catalyses the reaction carbamoyl phosphate + L-aspartate = N-carbamoyl-L-aspartate + phosphate + H(+). It participates in pyrimidine metabolism; UMP biosynthesis via de novo pathway; (S)-dihydroorotate from bicarbonate: step 2/3. In terms of biological role, catalyzes the condensation of carbamoyl phosphate and aspartate to form carbamoyl aspartate and inorganic phosphate, the committed step in the de novo pyrimidine nucleotide biosynthesis pathway. This is Aspartate carbamoyltransferase catalytic subunit from Prochlorococcus marinus (strain MIT 9211).